The sequence spans 336 residues: Phosphate acyltransferase (336 aa).

It belongs to the PlsX family. As to quaternary structure, homodimer. Probably interacts with PlsY.

It is found in the cytoplasm. The catalysed reaction is a fatty acyl-[ACP] + phosphate = an acyl phosphate + holo-[ACP]. It functions in the pathway lipid metabolism; phospholipid metabolism. Functionally, catalyzes the reversible formation of acyl-phosphate (acyl-PO(4)) from acyl-[acyl-carrier-protein] (acyl-ACP). This enzyme utilizes acyl-ACP as fatty acyl donor, but not acyl-CoA. The chain is Phosphate acyltransferase from Pseudomonas putida (strain GB-1).